A 365-amino-acid polypeptide reads, in one-letter code: DNA replication and repair protein RecF (365 aa).

30 to 37 (GRNAQGKT) is an ATP binding site.

This sequence belongs to the RecF family.

The protein localises to the cytoplasm. In terms of biological role, the RecF protein is involved in DNA metabolism; it is required for DNA replication and normal SOS inducibility. RecF binds preferentially to single-stranded, linear DNA. It also seems to bind ATP. In Streptococcus pneumoniae serotype 2 (strain D39 / NCTC 7466), this protein is DNA replication and repair protein RecF.